Consider the following 419-residue polypeptide: Putative nucleobase-ascorbate transporter 9 (419 aa).

Residues 1–22 (MANGAGNGGGGAGGNGGGGNNG) show a composition bias toward gly residues. The tract at residues 1-28 (MANGAGNGGGGAGGNGGGGNNGAGNRAE) is disordered. 10 helical membrane passes run 64-84 (LLSLGITVLIPSLLVPLMGGG), 91-111 (VIQTLLFVSGLTTLFQSFFGT), 113-133 (LPVIASASYAYIIPITSIIYS), 153-173 (IQGALIITGCFQVLVCFLGVW), 184-204 (SIAPLVTFTGLGLYHIGFPLV), 220-240 (GMMLCIPVVWLFAQLLTSSGV), 273-293 (SFAMMAASFVTLFESTGLFYA), 313-333 (RVIQISAAFMLFFSIFGKFGA), 334-354 (FFASIPLPIMASLYCIVLCFV), and 370-390 (FNTKFILGFSFFMAISIPQYF).

Belongs to the nucleobase:cation symporter-2 (NCS2) (TC 2.A.40) family.

It is found in the membrane. In Arabidopsis thaliana (Mouse-ear cress), this protein is Putative nucleobase-ascorbate transporter 9 (NAT9).